A 370-amino-acid polypeptide reads, in one-letter code: 3-dehydroquinate synthase (370 aa).

Residues 112–116, 136–137, Lys149, Lys158, and 176–179 contribute to the NAD(+) site; these read GVVGD, TS, and TLRT. The Zn(2+) site is built by Glu191, His254, and His276.

The protein belongs to the sugar phosphate cyclases superfamily. Dehydroquinate synthase family. Co(2+) is required as a cofactor. Requires Zn(2+) as cofactor. NAD(+) serves as cofactor.

It localises to the cytoplasm. The enzyme catalyses 7-phospho-2-dehydro-3-deoxy-D-arabino-heptonate = 3-dehydroquinate + phosphate. It functions in the pathway metabolic intermediate biosynthesis; chorismate biosynthesis; chorismate from D-erythrose 4-phosphate and phosphoenolpyruvate: step 2/7. Catalyzes the conversion of 3-deoxy-D-arabino-heptulosonate 7-phosphate (DAHP) to dehydroquinate (DHQ). The protein is 3-dehydroquinate synthase of Xanthomonas campestris pv. campestris (strain 8004).